Consider the following 394-residue polypeptide: 1-deoxy-D-xylulose 5-phosphate reductoisomerase (394 aa).

NADPH-binding residues include Thr-13, Gly-14, Thr-15, Ile-16, and Asn-125. 1-deoxy-D-xylulose 5-phosphate is bound at residue Lys-126. Position 127 (Glu-127) interacts with NADPH. Asp-151 serves as a coordination point for Mn(2+). The 1-deoxy-D-xylulose 5-phosphate site is built by Ser-152, Glu-153, Ser-182, and His-205. Glu-153 is a Mn(2+) binding site. Residue Gly-211 participates in NADPH binding. 1-deoxy-D-xylulose 5-phosphate is bound by residues Ser-218, Asn-223, Lys-224, and Glu-227. Glu-227 serves as a coordination point for Mn(2+).

It belongs to the DXR family. The cofactor is Mg(2+). Requires Mn(2+) as cofactor.

The enzyme catalyses 2-C-methyl-D-erythritol 4-phosphate + NADP(+) = 1-deoxy-D-xylulose 5-phosphate + NADPH + H(+). The protein operates within isoprenoid biosynthesis; isopentenyl diphosphate biosynthesis via DXP pathway; isopentenyl diphosphate from 1-deoxy-D-xylulose 5-phosphate: step 1/6. Functionally, catalyzes the NADPH-dependent rearrangement and reduction of 1-deoxy-D-xylulose-5-phosphate (DXP) to 2-C-methyl-D-erythritol 4-phosphate (MEP). This chain is 1-deoxy-D-xylulose 5-phosphate reductoisomerase, found in Methylobacillus flagellatus (strain ATCC 51484 / DSM 6875 / VKM B-1610 / KT).